Reading from the N-terminus, the 154-residue chain is MATFSQKPAEVEKKWVIIDAEGLVVGRLASIIAMRLRGKHKATFTPHVDDGDNVIVINAEKVVFTGKKYSDKVYYWHTGYAGGIKERSARQIIEGRFPERVLEKAVERMVPRGPLGRRQMKNLRVYAGSNHPHEAQQPVALDVAALNKKNVRSA.

The protein belongs to the universal ribosomal protein uL13 family. As to quaternary structure, part of the 50S ribosomal subunit.

In terms of biological role, this protein is one of the early assembly proteins of the 50S ribosomal subunit, although it is not seen to bind rRNA by itself. It is important during the early stages of 50S assembly. The sequence is that of Large ribosomal subunit protein uL13 from Rhizobium johnstonii (strain DSM 114642 / LMG 32736 / 3841) (Rhizobium leguminosarum bv. viciae).